We begin with the raw amino-acid sequence, 415 residues long: Tyrosine--tRNA ligase (415 aa).

Tyr33 contributes to the L-tyrosine binding site. The short motif at 38 to 47 (PSGESLHLGN) is the 'HIGH' region element. Residues Tyr161 and Gln165 each coordinate L-tyrosine. Positions 225–229 (KFGKS) match the 'KMSKS' region motif. Lys228 contacts ATP. The S4 RNA-binding domain maps to 350–414 (MVIDFLLQAK…KKNYFIVVWK (65 aa)).

This sequence belongs to the class-I aminoacyl-tRNA synthetase family. TyrS type 1 subfamily. In terms of assembly, homodimer.

Its subcellular location is the cytoplasm. The enzyme catalyses tRNA(Tyr) + L-tyrosine + ATP = L-tyrosyl-tRNA(Tyr) + AMP + diphosphate + H(+). Its function is as follows. Catalyzes the attachment of tyrosine to tRNA(Tyr) in a two-step reaction: tyrosine is first activated by ATP to form Tyr-AMP and then transferred to the acceptor end of tRNA(Tyr). The polypeptide is Tyrosine--tRNA ligase (Mycoplasmoides gallisepticum (strain R(low / passage 15 / clone 2)) (Mycoplasma gallisepticum)).